Consider the following 339-residue polypeptide: Protein FAM76B (339 aa).

Alanine 2 is subject to N-acetylalanine. Phosphoserine occurs at positions 22 and 148. The tract at residues 144–243 (EQRKSLGSSH…INQSADSGGT (100 aa)) is disordered. Low complexity predominate over residues 148 to 160 (SLGSSHSNSSSSS). A compositionally biased stretch (basic residues) spans 167–189 (HHSKHHHHHHHHHHRHSSGHHKV). The residue at position 193 (serine 193) is a Phosphoserine. Position 215 is a phosphothreonine (threonine 215). A compositionally biased stretch (basic and acidic residues) spans 215-224 (TPKKKPKLES). Positions 228–243 (NGDSSSINQSADSGGT) are enriched in polar residues. Residues 248–328 (LISQLKEEVM…QVAALSKGKK (81 aa)) adopt a coiled-coil conformation.

Belongs to the FAM76 family. Interacts with HNRNPA2B1 (via C-terminus); the interaction results in retention of HNRNPA2B1 in the nucleus and inhibition of the NF-kappa-B-mediated inflammatory pathway.

Its subcellular location is the nucleus speckle. Negatively regulates the NF-kappa-B-mediated inflammatory pathway by preventing the translocation of HNRNPA2B1 from the nucleus to the cytoplasm. Inhibits the PI3K/Akt/NF-kappa-B pathway-mediated polarization of M1 macrophages by binding to and stabilizing PIK3CD mRNA, resulting in increased levels of PIK3CD protein and increased levels of phosphorylated downstream target AKT which leads to decreased NF-kappa-B signaling. The protein is Protein FAM76B (Fam76b) of Mus musculus (Mouse).